A 343-amino-acid polypeptide reads, in one-letter code: Dihydroorotase (343 aa).

The Zn(2+) site is built by H13 and H15. Substrate-binding positions include 15-17 (HLR) and N41. Residues K99, H136, and H174 each coordinate Zn(2+). At K99 the chain carries N6-carboxylysine. Residue H136 participates in substrate binding. Position 219 (L219) interacts with substrate. Position 247 (D247) interacts with Zn(2+). D247 is a catalytic residue. The substrate site is built by H251 and A263.

Belongs to the metallo-dependent hydrolases superfamily. DHOase family. Class II DHOase subfamily. In terms of assembly, homodimer. Zn(2+) serves as cofactor.

It catalyses the reaction (S)-dihydroorotate + H2O = N-carbamoyl-L-aspartate + H(+). It participates in pyrimidine metabolism; UMP biosynthesis via de novo pathway; (S)-dihydroorotate from bicarbonate: step 3/3. Its function is as follows. Catalyzes the reversible cyclization of carbamoyl aspartate to dihydroorotate. This chain is Dihydroorotase, found in Shewanella baltica (strain OS195).